The chain runs to 202 residues: uncharacterized protein (202 aa).

This is an uncharacterized protein from Treponema pallidum (strain Nichols).